The sequence spans 209 residues: Small ribosomal subunit protein uS4 (209 aa).

In terms of domain architecture, S4 RNA-binding spans 98-164 (SRLDNVVYRG…TPFIVARETA (67 aa)).

It belongs to the universal ribosomal protein uS4 family. As to quaternary structure, part of the 30S ribosomal subunit. Contacts protein S5. The interaction surface between S4 and S5 is involved in control of translational fidelity.

Its function is as follows. One of the primary rRNA binding proteins, it binds directly to 16S rRNA where it nucleates assembly of the body of the 30S subunit. With S5 and S12 plays an important role in translational accuracy. The protein is Small ribosomal subunit protein uS4 of Frankia alni (strain DSM 45986 / CECT 9034 / ACN14a).